The sequence spans 224 residues: Holliday junction branch migration complex subunit RuvA (224 aa).

Residues 1–67 form a domain I region; the sequence is MISWLKGEKV…EDGTSLYGFI (67 aa). The domain II stretch occupies residues 68 to 146; sequence EVNQRDLFRE…RFTDNDKTIH (79 aa). The flexible linker stretch occupies residues 147 to 155; the sequence is ENKKGIEAN. The domain III stretch occupies residues 156-224; the sequence is QFSKYIDEIY…ILMKLSEKTT (69 aa).

The protein belongs to the RuvA family. As to quaternary structure, homotetramer. Forms an RuvA(8)-RuvB(12)-Holliday junction (HJ) complex. HJ DNA is sandwiched between 2 RuvA tetramers; dsDNA enters through RuvA and exits via RuvB. An RuvB hexamer assembles on each DNA strand where it exits the tetramer. Each RuvB hexamer is contacted by two RuvA subunits (via domain III) on 2 adjacent RuvB subunits; this complex drives branch migration. In the full resolvosome a probable DNA-RuvA(4)-RuvB(12)-RuvC(2) complex forms which resolves the HJ.

The protein resides in the cytoplasm. In terms of biological role, the RuvA-RuvB-RuvC complex processes Holliday junction (HJ) DNA during genetic recombination and DNA repair, while the RuvA-RuvB complex plays an important role in the rescue of blocked DNA replication forks via replication fork reversal (RFR). RuvA specifically binds to HJ cruciform DNA, conferring on it an open structure. The RuvB hexamer acts as an ATP-dependent pump, pulling dsDNA into and through the RuvAB complex. HJ branch migration allows RuvC to scan DNA until it finds its consensus sequence, where it cleaves and resolves the cruciform DNA. The chain is Holliday junction branch migration complex subunit RuvA from Prochlorococcus marinus (strain NATL1A).